Here is a 368-residue protein sequence, read N- to C-terminus: D-alanine--D-alanine ligase (368 aa).

An ATP-grasp domain is found at 151–358 (KKLLAAEGLP…YGTLVSTLVD (208 aa)). 179–234 (RSRLHLPVFVKPARGGSSIGITRVAEWAALDDAIAHARRHDPKVIVESGIAGREVE) contacts ATP. The Mg(2+) site is built by Asp-313, Glu-325, and Asn-327.

The protein belongs to the D-alanine--D-alanine ligase family. Mg(2+) serves as cofactor. Mn(2+) is required as a cofactor.

It localises to the cytoplasm. The catalysed reaction is 2 D-alanine + ATP = D-alanyl-D-alanine + ADP + phosphate + H(+). It participates in cell wall biogenesis; peptidoglycan biosynthesis. Functionally, cell wall formation. In Rhodococcus opacus (strain B4), this protein is D-alanine--D-alanine ligase.